Reading from the N-terminus, the 432-residue chain is D-amino acid dehydrogenase 1 (432 aa).

3-17 is an FAD binding site; sequence VLVLGSGVIGTASAY. The segment at 410–432 is disordered; sequence GLDISRYSNSPENAKNAHPAPAH.

Belongs to the DadA oxidoreductase family. The cofactor is FAD.

The catalysed reaction is a D-alpha-amino acid + A + H2O = a 2-oxocarboxylate + AH2 + NH4(+). The protein operates within amino-acid degradation; D-alanine degradation; NH(3) and pyruvate from D-alanine: step 1/1. In terms of biological role, catalyzes the oxidative deamination of D-amino acids. Has very broad substrate specificity; all the D-amino acids tested can be used as the substrate except D-Glu and D-Gln. Participates in the utilization of several D-amino acids as the sole source of nitrogen, i.e. D-alanine, D-histidine, D-phenylalanine, D-serine, D-threonine, and D-valine. This Pseudomonas aeruginosa (strain ATCC 15692 / DSM 22644 / CIP 104116 / JCM 14847 / LMG 12228 / 1C / PRS 101 / PAO1) protein is D-amino acid dehydrogenase 1 (dadA1).